Consider the following 497-residue polypeptide: MIATGGVITGLAALKRQDSTRSQYHLSAQSPGPAPEKKTTKRKPRADVVVVRGKIRLYSASGFFLVLGVLILMAGIAMAVLGYWPHKDQPKAPETKMSANNTQSFGREQAGSIAQFLEQHMHSEKMKMLGPFTMGIGIFIFICANAILHENRDRETKVIHMRDMYSTVIDIHSLRIKEQKCTNGACMGPYGGDTEIRTFGLDSQFASRLAANTLMSFSGLDGDVRFSHRTSSADDDDGLMSEARGGFCLLSPTYKDRSECIFGFQDDGRWEDRRGALKKCQTRSIVSSSISAFTLPVIKLNNCVIDEPDIDSITEDLEQSRVHSRPPSMESLTVPVPDIAKAFKPPGVQLLRSNSATESASSTSSRSSLSPGSTSGRFLSPGAARKDFGSNNSIHMLSAHSKSLDLERGPTKLTVQPEQRKHPSWPRLDRSNSKGYTRLENKEDPMDRLIVPPVDVKKDYTKKEKLLMISRSHNNLSFEHDEFMSSGLKRGTSETRF.

Topologically, residues 1–61 (MIATGGVITG…RGKIRLYSAS (61 aa)) are cytoplasmic. Residues 20–30 (TRSQYHLSAQS) are compositionally biased toward polar residues. The interval 20 to 44 (TRSQYHLSAQSPGPAPEKKTTKRKP) is disordered. A helical transmembrane segment spans residues 62-82 (GFFLVLGVLILMAGIAMAVLG). Over 83-127 (YWPHKDQPKAPETKMSANNTQSFGREQAGSIAQFLEQHMHSEKMK) the chain is Extracellular. An N-linked (GlcNAc...) asparagine glycan is attached at asparagine 100. The helical transmembrane segment at 128-148 (MLGPFTMGIGIFIFICANAIL) threads the bilayer. The Cytoplasmic segment spans residues 149–497 (HENRDRETKV…LKRGTSETRF (349 aa)). The segment covering 353–375 (SNSATESASSTSSRSSLSPGSTS) has biased composition (low complexity). Disordered stretches follow at residues 353–385 (SNSA…GAAR) and 400–438 (HSKS…GYTR). The segment covering 427-438 (RLDRSNSKGYTR) has biased composition (basic and acidic residues).

Belongs to the TMEM200 family.

The protein localises to the membrane. The sequence is that of Transmembrane protein 200A (tmem200a) from Danio rerio (Zebrafish).